The sequence spans 462 residues: Retinoic acid receptor alpha (462 aa).

The modulating stretch occupies residues 1–87; the sequence is MASNSSSCPT…PPPLPRIYKP (87 aa). Polar residues predominate over residues 52-64; the sequence is GYSTPSPATIETQ. Positions 52–77 are disordered; sequence GYSTPSPATIETQSSSSEEIVPSPPS. The residue at position 77 (Ser77) is a Phosphoserine; by CDK7. NR C4-type zinc fingers lie at residues 88–108 and 124–148; these read CFVCQDKSSGYHYGVSACEGC and CHRDKNCIINKVTRNRCQYCRLQKC. The nuclear receptor DNA-binding region spans 88 to 153; it reads CFVCQDKSSG…RLQKCFDVGM (66 aa). The residue at position 96 (Ser96) is a Phosphoserine; by PKB/AKT1. The tract at residues 154-182 is hinge; sequence SKESVRNDRNKKKKEAPKPECSESYTLTP. Residues Lys166 and Lys171 each participate in a glycyl lysine isopeptide (Lys-Gly) (interchain with G-Cter in SUMO) cross-link. Positions 183–417 constitute an NR LBD domain; that stretch reads EVGELIEKVR…PLIQEMLENS (235 aa). Ser219 is subject to Phosphoserine; by PKA. Cys235 provides a ligand contact to all-trans-retinoate. Positions 254–258 match the UBR5-degron motif; it reads IADQI. Ser287 is a binding site for all-trans-retinoate. N6,N6,N6-trimethyllysine is present on Lys347. Phosphoserine; by PKA and RPS6KA5 is present on Ser369. Residue Lys399 forms a Glycyl lysine isopeptide (Lys-Gly) (interchain with G-Cter in SUMO) linkage. The tract at residues 404–419 is required for binding corepressor NCOR1; that stretch reads GSMPPLIQEMLENSEG. The 9aaTAD motif lies at 408 to 416; it reads PLIQEMLEN. Positions 420–462 are disordered; sequence LDTLSGQSGGGTRDGGGLAPPPGSCSPSLSPSSHRSSPATQSP. Gly residues predominate over residues 426–437; it reads QSGGGTRDGGGL. Residues 444 to 462 show a composition bias toward low complexity; the sequence is CSPSLSPSSHRSSPATQSP.

The protein belongs to the nuclear hormone receptor family. NR1 subfamily. In terms of assembly, heterodimer; with RXRA. Binds DNA preferentially as a heterodimer. RXRA serves as enhancer to induce RARA binding to RARE. Interacts with RXRG. Interacts with NCOA3 and NCOA6 coactivators, leading to a strong increase of transcription of target genes. Interacts with NCOA7; the interaction requires ligand-binding. Interacts (via the ligand-binding domain) with PRAME; interaction is direct and ligand (retinoic acid)-dependent. Interacts with PRKAR1A; the interaction negatively regulates RARA transcriptional activity. Interacts with NCOR1; the interaction occurs in the absence of ligand and represses transcriptional activity. Interacts with NCOR2. Interacts with PRMT2. Interacts with LRIF1. Interacts with ASXL1 and NCOA1. Interacts with ACTN4. Interacts with CDK7; the interaction is enhanced by interaction with GTF2H3. Interacts with GTF2H3; the interaction requires prior phosphorylation on Ser-369 which then enhances interaction with CDK7. In a complex with HDAC3, HDAC5 and HDAC7; the HDACs serve as corepressors of RARA, causing its deacetylation and inhibition of RARE DNA element binding; association with HDAC3, HDAC5 and HDAC7 is increased upon oscillatory shear stress. In the absence of hormonal ligand, interacts with TACC1. In terms of processing, phosphorylated on serine and threonine residues. Phosphorylation does not change during cell cycle. Phosphorylation on Ser-77 is crucial for the N-terminal AF1 transcriptional activity. Under stress conditions, MAPK8 enhances phosphorylation on Thr-181, Ser-445 and Ser-461 leading to RARA ubiquitination and degradation. Phosphorylation by AKT1 inhibits the transactivation activity. On retinoic acid stimulation, phosphorylation on Ser-369 by RPS6KA5 promotes interaction with GTF2H3 and the CDK7-mediated phosphorylation of Ser-77. Post-translationally, ubiquitinated by UBR5, leading to its degradation: UBR5 specifically recognizes and binds ligand-bound RARA when it is not associated with coactivators (NCOAs). In presence of NCOAs, the UBR5-degron is not accessible, preventing its ubiquitination and degradation. Sumoylated with SUMO2, mainly on Lys-399 which is also required for SENP6 binding. On all-trans retinoic acid (ATRA) binding, a conformational change may occur that allows sumoylation on two additional site, Lys-166 and Lys-171. Probably desumoylated by SENP6. Sumoylation levels determine nuclear localization and regulate ATRA-mediated transcriptional activity. In terms of processing, acetylated; acetylation is increased upon pulsatile shear stress and decreased upon oscillatory shear stress. In terms of tissue distribution, expressed in Sertoli cells and germ cells.

Its subcellular location is the nucleus. The protein localises to the cytoplasm. Its function is as follows. Receptor for retinoic acid. Retinoic acid receptors bind as heterodimers to their target response elements in response to their ligands, all-trans or 9-cis retinoic acid, and regulate gene expression in various biological processes. The RXR/RAR heterodimers bind to the retinoic acid response elements (RARE) composed of tandem 5'-AGGTCA-3' sites known as DR1-DR5. In the absence of ligand, the RXR-RAR heterodimers associate with a multiprotein complex containing transcription corepressors that induce histone deacetylation, chromatin condensation and transcriptional suppression. On ligand binding, the corepressors dissociate from the receptors and associate with the coactivators leading to transcriptional activation. Formation of heterocomplex with histone deacetylases might lead to inhibition of RARE DNA element binding and to transcriptional repression. Transcriptional activation and RARE DNA element binding might be supported by the transcription factor KLF2. RARA plays an essential role in the regulation of retinoic acid-induced germ cell development during spermatogenesis. Has a role in the survival of early spermatocytes at the beginning prophase of meiosis. In Sertoli cells, may promote the survival and development of early meiotic prophase spermatocytes. In concert with RARG, required for skeletal growth, matrix homeostasis and growth plate function. Together with RXRA, positively regulates microRNA-10a expression, thereby inhibiting the GATA6/VCAM1 signaling response to pulsatile shear stress in vascular endothelial cells. In association with HDAC3, HDAC5 and HDAC7 corepressors, plays a role in the repression of microRNA-10a and thereby promotes the inflammatory response. The chain is Retinoic acid receptor alpha (Rara) from Mus musculus (Mouse).